A 568-amino-acid chain; its full sequence is Arginine--tRNA ligase (568 aa).

Positions 129–139 match the 'HIGH' region motif; the sequence is ANPTGPLHIGH.

It belongs to the class-I aminoacyl-tRNA synthetase family. Monomer.

It localises to the cytoplasm. The enzyme catalyses tRNA(Arg) + L-arginine + ATP = L-arginyl-tRNA(Arg) + AMP + diphosphate. In Wolbachia pipientis wMel, this protein is Arginine--tRNA ligase.